The primary structure comprises 440 residues: Actin-like protein 7A (440 aa).

Residues methionine 1–glutamine 29 form a disordered region. Residues alanine 36–threonine 56 form a required for interaction with TES region.

The protein belongs to the actin family. In terms of assembly, interacts (via N-terminus) with TES (via LIM domain 2). Heterodimer with TES; the heterodimer interacts with ENAH to form a heterotrimer. Interacts with ACTL9. Interacts with CYLC1; the interaction may be relevant for proper acrosome attachment to the nuclear envelope. Detected in testis. Detected at the acrosome of round spermatids (at protein level). Detected in adult and embryonic testis. Detected in developing male germ cells.

It localises to the cytoplasm. The protein resides in the cytoskeleton. The protein localises to the golgi apparatus. Its subcellular location is the nucleus. It is found in the cytoplasmic vesicle. It localises to the secretory vesicle. The protein resides in the acrosome. Essential for normal spermatogenesis and male fertility. Required for normal sperm head morphology, acroplaxome formation, acrosome attachment, and acrosome granule stability. May anchor and stabilize acrosomal adherence to the acroplaxome at least in part by facilitating the presence of F-actin in the subacrosomal space. May play an important role in formation and fusion of Golgi-derived vesicles during acrosome biogenesis. The polypeptide is Actin-like protein 7A (Actl7a) (Mus musculus (Mouse)).